The chain runs to 277 residues: 5'-nucleotidase SurE (277 aa).

A divalent metal cation-binding residues include aspartate 14, aspartate 15, serine 46, and asparagine 104.

This sequence belongs to the SurE nucleotidase family. A divalent metal cation is required as a cofactor.

It localises to the cytoplasm. The enzyme catalyses a ribonucleoside 5'-phosphate + H2O = a ribonucleoside + phosphate. Its function is as follows. Nucleotidase that shows phosphatase activity on nucleoside 5'-monophosphates. In Picosynechococcus sp. (strain ATCC 27264 / PCC 7002 / PR-6) (Agmenellum quadruplicatum), this protein is 5'-nucleotidase SurE.